The chain runs to 202 residues: tRNA (pseudouridine(54)-N(1))-methyltransferase (202 aa).

Positions 130, 152, and 185 each coordinate S-adenosyl-L-methionine.

The protein belongs to the methyltransferase superfamily. TrmY family. Homodimer.

It localises to the cytoplasm. It carries out the reaction pseudouridine(54) in tRNA + S-adenosyl-L-methionine = N(1)-methylpseudouridine(54) in tRNA + S-adenosyl-L-homocysteine + H(+). Specifically catalyzes the N1-methylation of pseudouridine at position 54 (Psi54) in tRNAs. This chain is tRNA (pseudouridine(54)-N(1))-methyltransferase, found in Methanococcoides burtonii (strain DSM 6242 / NBRC 107633 / OCM 468 / ACE-M).